Reading from the N-terminus, the 429-residue chain is Glutamate-1-semialdehyde 2,1-aminomutase 1 (429 aa).

Lysine 268 is subject to N6-(pyridoxal phosphate)lysine.

The protein belongs to the class-III pyridoxal-phosphate-dependent aminotransferase family. HemL subfamily. As to quaternary structure, homodimer. It depends on pyridoxal 5'-phosphate as a cofactor.

The protein localises to the cytoplasm. It catalyses the reaction (S)-4-amino-5-oxopentanoate = 5-aminolevulinate. It functions in the pathway porphyrin-containing compound metabolism; protoporphyrin-IX biosynthesis; 5-aminolevulinate from L-glutamyl-tRNA(Glu): step 2/2. The protein is Glutamate-1-semialdehyde 2,1-aminomutase 1 of Listeria welshimeri serovar 6b (strain ATCC 35897 / DSM 20650 / CCUG 15529 / CIP 8149 / NCTC 11857 / SLCC 5334 / V8).